We begin with the raw amino-acid sequence, 592 residues long: Cyclin-dependent kinase-like 3 (592 aa).

The Protein kinase domain occupies 4–286 (YETLGKVGEG…SSDLLHHEYF (283 aa)). Residues 10-18 (VGEGSYGTV) and Lys-33 contribute to the ATP site. Positions 44-50 (NKIAMRE) match the [NKR]KIAxRE motif. Residue Asp-125 is the Proton acceptor of the active site. Residue Thr-158 is modified to Phosphothreonine. Residue Tyr-160 is modified to Phosphotyrosine. The segment covering 368–379 (GDISEPKKKEYE) has biased composition (basic and acidic residues). 2 disordered regions span residues 368 to 390 (GDIS…ANEN) and 459 to 485 (RAKK…PGPI). Residues 466–477 (SSQSIGQVMPNS) show a composition bias toward polar residues.

The protein belongs to the protein kinase superfamily. CMGC Ser/Thr protein kinase family. CDC2/CDKX subfamily.

It localises to the cytoplasm. The catalysed reaction is L-seryl-[protein] + ATP = O-phospho-L-seryl-[protein] + ADP + H(+). It carries out the reaction L-threonyl-[protein] + ATP = O-phospho-L-threonyl-[protein] + ADP + H(+). In Homo sapiens (Human), this protein is Cyclin-dependent kinase-like 3.